Consider the following 357-residue polypeptide: DNA replication and repair protein RecF (357 aa).

31–38 provides a ligand contact to ATP; the sequence is GQNGAGKT.

The protein belongs to the RecF family.

It is found in the cytoplasm. Its function is as follows. The RecF protein is involved in DNA metabolism; it is required for DNA replication and normal SOS inducibility. RecF binds preferentially to single-stranded, linear DNA. It also seems to bind ATP. This is DNA replication and repair protein RecF from Coxiella burnetii (strain RSA 493 / Nine Mile phase I).